Reading from the N-terminus, the 736-residue chain is Protein kinase C epsilon type (736 aa).

The region spanning M1 to I117 is the C2 domain. Phosphoserine is present on S62. A Phorbol-ester/DAG-type 1 zinc finger spans residues G169–V220. Residue T228 is modified to Phosphothreonine. At S234 the chain carries Phosphoserine. The Phorbol-ester/DAG-type 2 zinc finger occupies P242–C292. A Phosphothreonine modification is found at T309. The tract at residues P310–L356 is disordered. Phosphoserine occurs at positions 316, 329, and 337. S346 is modified (phosphoserine; by GSK3-beta). T349 carries the post-translational modification Phosphothreonine. Position 350 is a phosphoserine; by MAPK11 and MAPK14 (S350). Position 368 is a phosphoserine; by autocatalysis (S368). The interval F369–G397 is disordered. S388 bears the Phosphoserine mark. The 261-residue stretch at F407–F667 folds into the Protein kinase domain. Residues L413–V421 and K436 each bind ATP. Catalysis depends on D531, which acts as the Proton acceptor. T565 is subject to Phosphothreonine; by PDPK1. The AGC-kinase C-terminal domain maps to K668–P736. A Phosphothreonine modification is found at T702. Residue T709 is modified to Phosphothreonine; by autocatalysis. Phosphoserine; by autocatalysis is present on S728.

Belongs to the protein kinase superfamily. AGC Ser/Thr protein kinase family. PKC subfamily. As to quaternary structure, forms a ternary complex with TRIM63 and RACK1/GN2BL1. Can form a complex with PDLIM5 and N-type calcium channel. Interacts with COPB1. Interacts with DGKQ. Interacts with STAT3. Interacts with YWHAB. Interacts with HSP90AB1; promotes functional activation in a heat shock-dependent manner. Interacts (via phorbol-ester/DAG-type 2 domain) with PRPH and VIM. Interacts with NLRP5/MATER. Phosphorylation on Thr-565 by PDPK1 triggers autophosphorylation on Ser-728. Phosphorylation in the hinge domain at Ser-350 by MAPK11 or MAPK14, Ser-346 by GSK3B and Ser-368 by autophosphorylation is required for interaction with YWHAB. In response to growth factors, phosphorylated at Thr-702 and Ser-728 by the mTORC2 complex, promoting autophosphorylation and activation of PRKCE.

Its subcellular location is the cytoplasm. It is found in the cytoskeleton. The protein localises to the cell membrane. The protein resides in the perinuclear region. It localises to the nucleus. The catalysed reaction is L-seryl-[protein] + ATP = O-phospho-L-seryl-[protein] + ADP + H(+). The enzyme catalyses L-threonyl-[protein] + ATP = O-phospho-L-threonyl-[protein] + ADP + H(+). Novel PKCs (PRKCD, PRKCE, PRKCH and PRKCQ) are calcium-insensitive, but activated by diacylglycerol (DAG) and phosphatidylserine. Three specific sites; Thr-565 (activation loop of the kinase domain), Thr-709 (turn motif) and Ser-728 (hydrophobic region), need to be phosphorylated for its full activation. Calcium-independent, phospholipid- and diacylglycerol (DAG)-dependent serine/threonine-protein kinase that plays essential roles in the regulation of multiple cellular processes linked to cytoskeletal proteins, such as cell adhesion, motility, migration and cell cycle, functions in neuron growth and ion channel regulation, and is involved in immune response, cancer cell invasion and regulation of apoptosis. Mediates cell adhesion to the extracellular matrix via integrin-dependent signaling, by mediating angiotensin-2-induced activation of integrin beta-1 (ITGB1) in cardiac fibroblasts. Phosphorylates MARCKS, which phosphorylates and activates PTK2/FAK, leading to the spread of cardiomyocytes. Involved in the control of the directional transport of ITGB1 in mesenchymal cells by phosphorylating vimentin (VIM), an intermediate filament (IF) protein. In epithelial cells, associates with and phosphorylates keratin-8 (KRT8), which induces targeting of desmoplakin at desmosomes and regulates cell-cell contact. Phosphorylates IQGAP1, which binds to CDC42, mediating epithelial cell-cell detachment prior to migration. During cytokinesis, forms a complex with YWHAB, which is crucial for daughter cell separation, and facilitates abscission by a mechanism which may implicate the regulation of RHOA. In cardiac myocytes, regulates myofilament function and excitation coupling at the Z-lines, where it is indirectly associated with F-actin via interaction with COPB1. During endothelin-induced cardiomyocyte hypertrophy, mediates activation of PTK2/FAK, which is critical for cardiomyocyte survival and regulation of sarcomere length. Plays a role in the pathogenesis of dilated cardiomyopathy via persistent phosphorylation of troponin I (TNNI3). Involved in nerve growth factor (NFG)-induced neurite outgrowth and neuron morphological change independently of its kinase activity, by inhibition of RHOA pathway, activation of CDC42 and cytoskeletal rearrangement. May be involved in presynaptic facilitation by mediating phorbol ester-induced synaptic potentiation. Phosphorylates gamma-aminobutyric acid receptor subunit gamma-2 (GABRG2), which reduces the response of GABA receptors to ethanol and benzodiazepines and may mediate acute tolerance to the intoxicating effects of ethanol. Upon PMA treatment, phosphorylates the capsaicin- and heat-activated cation channel TRPV1, which is required for bradykinin-induced sensitization of the heat response in nociceptive neurons. Is able to form a complex with PDLIM5 and N-type calcium channel, and may enhance channel activities and potentiates fast synaptic transmission by phosphorylating the pore-forming alpha subunit CACNA1B (CaV2.2). Downstream of TLR4, plays an important role in the lipopolysaccharide (LPS)-induced immune response by phosphorylating and activating TICAM2/TRAM, which in turn activates the transcription factor IRF3 and subsequent cytokines production. In differentiating erythroid progenitors, is regulated by EPO and controls the protection against the TNFSF10/TRAIL-mediated apoptosis, via BCL2. May be involved in the regulation of the insulin-induced phosphorylation and activation of AKT1. Phosphorylates NLRP5/MATER and may thereby modulate AKT pathway activation in cumulus cells. Phosphorylates and activates LRRK1, which phosphorylates RAB proteins involved in intracellular trafficking. The protein is Protein kinase C epsilon type (PRKCE) of Oryctolagus cuniculus (Rabbit).